The sequence spans 300 residues: Epimerase family protein SAR0825 (300 aa).

This sequence belongs to the NAD(P)-dependent epimerase/dehydratase family. SDR39U1 subfamily.

This is Epimerase family protein SAR0825 from Staphylococcus aureus (strain MRSA252).